The primary structure comprises 173 residues: Bifunctional protein PyrR (173 aa).

Positions valine 94–threonine 106 match the PRPP-binding motif.

The protein belongs to the purine/pyrimidine phosphoribosyltransferase family. PyrR subfamily. As to quaternary structure, homodimer and homohexamer; in equilibrium.

The enzyme catalyses UMP + diphosphate = 5-phospho-alpha-D-ribose 1-diphosphate + uracil. Its function is as follows. Regulates transcriptional attenuation of the pyrimidine nucleotide (pyr) operon by binding in a uridine-dependent manner to specific sites on pyr mRNA. This disrupts an antiterminator hairpin in the RNA and favors formation of a downstream transcription terminator, leading to a reduced expression of downstream genes. In terms of biological role, also displays a weak uracil phosphoribosyltransferase activity which is not physiologically significant. In Streptococcus gordonii (strain Challis / ATCC 35105 / BCRC 15272 / CH1 / DL1 / V288), this protein is Bifunctional protein PyrR.